A 681-amino-acid polypeptide reads, in one-letter code: Pumilio domain-containing protein C6G9.14 (681 aa).

Disordered stretches follow at residues 180 to 210 (RPGL…PGLI) and 273 to 322 (ASTA…NVPS). Composition is skewed to low complexity over residues 187 to 210 (TPGP…PGLI) and 273 to 286 (ASTA…SSGS). Positions 319–659 (NVPSLISDDP…RILSKLERRH (341 aa)) constitute a PUM-HD domain. Pumilio repeat units follow at residues 342-378 (SLQN…AVFA), 379-414 (ETHP…TFIQ), 415-451 (IIAP…CIVN), 452-487 (ALRP…FIFD), 488-523 (AICE…QLVE), 524-559 (HIVP…AIIS), 560-595 (YFLY…KLIS), and 596-633 (ELMD…ELVE). A compositionally biased stretch (basic and acidic residues) spans 656–666 (ERRHPSSKEKP). The interval 656–681 (ERRHPSSKEKPIVYSNSERVNTSSSA) is disordered. The segment covering 669–681 (YSNSERVNTSSSA) has biased composition (polar residues).

The protein is Pumilio domain-containing protein C6G9.14 of Schizosaccharomyces pombe (strain 972 / ATCC 24843) (Fission yeast).